A 494-amino-acid polypeptide reads, in one-letter code: Glycogen synthase (494 aa).

Lysine 15 is an ADP-alpha-D-glucose binding site.

This sequence belongs to the glycosyltransferase 1 family. Bacterial/plant glycogen synthase subfamily.

The enzyme catalyses [(1-&gt;4)-alpha-D-glucosyl](n) + ADP-alpha-D-glucose = [(1-&gt;4)-alpha-D-glucosyl](n+1) + ADP + H(+). It functions in the pathway glycan biosynthesis; glycogen biosynthesis. Functionally, synthesizes alpha-1,4-glucan chains using ADP-glucose. The protein is Glycogen synthase of Albidiferax ferrireducens (strain ATCC BAA-621 / DSM 15236 / T118) (Rhodoferax ferrireducens).